We begin with the raw amino-acid sequence, 117 residues long: Large ribosomal subunit protein bL20c (117 aa).

Belongs to the bacterial ribosomal protein bL20 family.

The protein resides in the plastid. It is found in the chloroplast. Its function is as follows. Binds directly to 23S ribosomal RNA and is necessary for the in vitro assembly process of the 50S ribosomal subunit. It is not involved in the protein synthesizing functions of that subunit. The protein is Large ribosomal subunit protein bL20c of Manihot esculenta (Cassava).